We begin with the raw amino-acid sequence, 298 residues long: Ribosomal RNA small subunit methyltransferase H (298 aa).

S-adenosyl-L-methionine contacts are provided by residues 35 to 37, Asp55, Phe82, Asp100, and Gln107; that span reads GGH.

Belongs to the methyltransferase superfamily. RsmH family.

It localises to the cytoplasm. It catalyses the reaction cytidine(1402) in 16S rRNA + S-adenosyl-L-methionine = N(4)-methylcytidine(1402) in 16S rRNA + S-adenosyl-L-homocysteine + H(+). Specifically methylates the N4 position of cytidine in position 1402 (C1402) of 16S rRNA. In Chlamydia abortus (strain DSM 27085 / S26/3) (Chlamydophila abortus), this protein is Ribosomal RNA small subunit methyltransferase H.